The sequence spans 316 residues: Pantothenate kinase (316 aa).

Position 95-102 (Gly95–Ser102) interacts with ATP.

This sequence belongs to the prokaryotic pantothenate kinase family.

It is found in the cytoplasm. The catalysed reaction is (R)-pantothenate + ATP = (R)-4'-phosphopantothenate + ADP + H(+). It functions in the pathway cofactor biosynthesis; coenzyme A biosynthesis; CoA from (R)-pantothenate: step 1/5. In Enterobacter sp. (strain 638), this protein is Pantothenate kinase.